The chain runs to 450 residues: Probable ECA polymerase (450 aa).

Transmembrane regions (helical) follow at residues 6 to 26 (FSGLFVVWLLCTLFIATLTWF), 37 to 57 (VFFSLLFLLTFFFGFPLTSVL), 63 to 83 (VGVAPPEILLQALLSAGCFYA), 118 to 138 (VILMGVALVSVGIFFMHNGFL), 155 to 175 (GVALKRFFYFFIPAMLVVYFL), 181 to 201 (AWLFFLVSTVAFGLLTYMIVG), 207 to 227 (IIIAFAIFLFIGIIRGWISLW), 228 to 248 (MLAAAGVLGIVGMFWLALKRY), 341 to 361 (LVVMGGALFIPLGAIVVGLII), 378 to 398 (YKAAILHSFCFGAIFNMIVLA), and 410 to 430 (VFFIVVFGACLMIAKLLYWLF).

This sequence belongs to the WzyE family. As to quaternary structure, probably part of a complex composed of WzxE, WzyE and WzzE.

It is found in the cell inner membrane. The protein operates within bacterial outer membrane biogenesis; enterobacterial common antigen biosynthesis. Probably involved in the polymerization of enterobacterial common antigen (ECA) trisaccharide repeat units. The chain is Probable ECA polymerase from Escherichia coli O17:K52:H18 (strain UMN026 / ExPEC).